Reading from the N-terminus, the 204-residue chain is Small ribosomal subunit protein uS4c (204 aa).

Residues 90 to 150 enclose the S4 RNA-binding domain; sequence MRLDNILYRL…GKKTDQLKTI (61 aa).

Belongs to the universal ribosomal protein uS4 family. Part of the 30S ribosomal subunit. Contacts protein S5. The interaction surface between S4 and S5 is involved in control of translational fidelity.

It localises to the plastid. It is found in the chloroplast. Its function is as follows. One of the primary rRNA binding proteins, it binds directly to 16S rRNA where it nucleates assembly of the body of the 30S subunit. In terms of biological role, with S5 and S12 plays an important role in translational accuracy. In Gnetum parvifolium (Small-leaved jointfir), this protein is Small ribosomal subunit protein uS4c (rps4).